A 1314-amino-acid polypeptide reads, in one-letter code: E3 ubiquitin-protein ligase RNF123 (1314 aa).

Alanine 2 carries the post-translational modification N-acetylalanine. Residues 74 to 254 form the B30.2/SPRY domain; the sequence is VDSEDEESQG…VAFNFGSRPL (181 aa). The segment at 460 to 481 is disordered; sequence HRSSREGKDSAEDRAEAAEERP. Basic and acidic residues predominate over residues 462–481; it reads SSREGKDSAEDRAEAAEERP. Position 675 is a phosphoserine (serine 675). Arginine 683 carries the asymmetric dimethylarginine modification. Residues 968–974 are interaction with NFKB1; sequence WILVRLW. Residues cysteine 1254, cysteine 1257, cysteine 1269, histidine 1271, cysteine 1274, cysteine 1277, cysteine 1288, and cysteine 1291 each coordinate Zn(2+). The RING-type zinc-finger motif lies at 1254-1292; sequence CPICYAHPISAVFQPCGHKSCKACIDQHLMNNKDCFFCK.

As to quaternary structure, component of the KPC complex composed of RNF123/KPC1 and UBAC1/KPC2. Interacts with UBAC1 and CDKN1B via its N-terminal domain. Interacts with RIGI (via N-terminus) and IFIH1 (via N-terminus). In terms of processing, ubiquitinated, leading to its degradation. Deubiquitinated by USP19, thereby stimulating CDKN1B ubiquitin-dependent degradation.

Its subcellular location is the cytoplasm. It carries out the reaction S-ubiquitinyl-[E2 ubiquitin-conjugating enzyme]-L-cysteine + [acceptor protein]-L-lysine = [E2 ubiquitin-conjugating enzyme]-L-cysteine + N(6)-ubiquitinyl-[acceptor protein]-L-lysine.. It participates in protein modification; protein ubiquitination. Functionally, catalytic subunit of the KPC complex that acts as E3 ubiquitin-protein ligase. Promotes the ubiquitination and proteasome-mediated degradation of CDKN1B which is the cyclin-dependent kinase inhibitor at the G0-G1 transition of the cell cycle. Also acts as a key regulator of the NF-kappa-B signaling by promoting maturation of the NFKB1 component of NF-kappa-B. Acts by catalyzing ubiquitination of the NFKB1 p105 precursor, leading to limited proteasomal degradation of NFKB1 p105 and generation of the active NFKB1 p50 subunit. Functions also as an inhibitor of innate antiviral signaling mediated by RIGI and IFIH1 independently of its E3 ligase activity. Interacts with the N-terminal CARD domains of RIGI and IFIH1 and competes with the downstream adapter MAVS. This Oryctolagus cuniculus (Rabbit) protein is E3 ubiquitin-protein ligase RNF123.